A 186-amino-acid polypeptide reads, in one-letter code: dCTP deaminase (186 aa).

107–112 (KSTYAR) provides a ligand contact to dCTP. The active-site Proton donor/acceptor is E133. The dCTP site is built by Q152, Y166, and Q176.

Belongs to the dCTP deaminase family. In terms of assembly, homotrimer.

It catalyses the reaction dCTP + H2O + H(+) = dUTP + NH4(+). The protein operates within pyrimidine metabolism; dUMP biosynthesis; dUMP from dCTP (dUTP route): step 1/2. Catalyzes the deamination of dCTP to dUTP. The protein is dCTP deaminase of Campylobacter concisus (strain 13826).